The sequence spans 93 residues: UPF0369 protein RC0209 (93 aa).

The disordered stretch occupies residues 1-24 (MDDKKDNRHLSKPAYREECTGDTE). The RPE1 insert domain maps to 8 to 55 (RHLSKPAYREECTGDTERSTTAYMDILEDVSTGSTSKLPLEAKFVKIS).

It belongs to the SDHAF4 family.

The sequence is that of UPF0369 protein RC0209 from Rickettsia conorii (strain ATCC VR-613 / Malish 7).